Here is a 458-residue protein sequence, read N- to C-terminus: ATP synthase subunit beta (458 aa).

148–155 provides a ligand contact to ATP; it reads GGAGVGKT.

This sequence belongs to the ATPase alpha/beta chains family. In terms of assembly, F-type ATPases have 2 components, CF(1) - the catalytic core - and CF(0) - the membrane proton channel. CF(1) has five subunits: alpha(3), beta(3), gamma(1), delta(1), epsilon(1). CF(0) has three main subunits: a(1), b(2) and c(9-12). The alpha and beta chains form an alternating ring which encloses part of the gamma chain. CF(1) is attached to CF(0) by a central stalk formed by the gamma and epsilon chains, while a peripheral stalk is formed by the delta and b chains.

It is found in the cell inner membrane. The catalysed reaction is ATP + H2O + 4 H(+)(in) = ADP + phosphate + 5 H(+)(out). Its function is as follows. Produces ATP from ADP in the presence of a proton gradient across the membrane. The catalytic sites are hosted primarily by the beta subunits. This is ATP synthase subunit beta from Pseudomonas putida (strain GB-1).